The sequence spans 675 residues: Methionine--tRNA ligase (675 aa).

Residues 15–25 (PYANGPIHLGH) carry the 'HIGH' region motif. The Zn(2+) site is built by Cys-146, Cys-149, Cys-159, and Cys-162. The short motif at 332–336 (KMSKS) is the 'KMSKS' region element. Lys-335 is a binding site for ATP. A tRNA-binding domain is found at 573 to 675 (DFAKVDMRVA…SGAQPGMQVK (103 aa)).

It belongs to the class-I aminoacyl-tRNA synthetase family. MetG type 1 subfamily. Homodimer. Zn(2+) is required as a cofactor.

The protein resides in the cytoplasm. The enzyme catalyses tRNA(Met) + L-methionine + ATP = L-methionyl-tRNA(Met) + AMP + diphosphate. Functionally, is required not only for elongation of protein synthesis but also for the initiation of all mRNA translation through initiator tRNA(fMet) aminoacylation. The polypeptide is Methionine--tRNA ligase (Photorhabdus laumondii subsp. laumondii (strain DSM 15139 / CIP 105565 / TT01) (Photorhabdus luminescens subsp. laumondii)).